The sequence spans 469 residues: Glutamate--tRNA ligase (469 aa).

The 'HIGH' region motif lies at 11–21 (PSPTGFIHLGN). The span at 121–131 (PRYDGTWRPEP) shows a compositional bias: basic and acidic residues. Positions 121 to 141 (PRYDGTWRPEPGKVLPEPPPG) are disordered. Residues 243–247 (KMSKR) carry the 'KMSKS' region motif. K246 provides a ligand contact to ATP.

Belongs to the class-I aminoacyl-tRNA synthetase family. Glutamate--tRNA ligase type 1 subfamily. Monomer.

Its subcellular location is the cytoplasm. It catalyses the reaction tRNA(Glu) + L-glutamate + ATP = L-glutamyl-tRNA(Glu) + AMP + diphosphate. Functionally, catalyzes the attachment of glutamate to tRNA(Glu) in a two-step reaction: glutamate is first activated by ATP to form Glu-AMP and then transferred to the acceptor end of tRNA(Glu). The chain is Glutamate--tRNA ligase from Burkholderia multivorans (strain ATCC 17616 / 249).